A 475-amino-acid chain; its full sequence is Ataxin-10 (475 aa).

Residue R10 is modified to Omega-N-methylarginine. Phosphoserine is present on residues S12 and S77. T82 bears the Phosphothreonine mark. S430 bears the Phosphoserine mark.

This sequence belongs to the ataxin-10 family. Homooligomer. Interacts with GNB2. Interacts with IQCB1. Interacts with OGT. Post-translationally, polyubiquitinated. Phosphorylation at Ser-12 by AURKB promotes the association of ATXN10 with PLK1. Phosphorylation at Ser-77 and Thr-82 by PLK1 may play a role in the regulation of cytokinesis and may stimulate the proteasome-mediated degradation of ATXN10. Ubiquitous distribution. Markedly increased expression in testis, adrenals, and brain.

It is found in the cytoplasm. The protein resides in the perinuclear region. It localises to the midbody. The protein localises to the cytoskeleton. Its subcellular location is the cilium basal body. It is found in the microtubule organizing center. The protein resides in the centrosome. It localises to the centriole. May play a role in the regulation of cytokinesis. May play a role in signaling by stimulating protein glycosylation. Induces neuritogenesis by activating the Ras-MAP kinase pathway and is necessary for the survival of cerebellar neurons. Does not appear to play a major role in ciliogenesis. This is Ataxin-10 (Atxn10) from Rattus norvegicus (Rat).